The sequence spans 76 residues: uncharacterized protein (76 aa).

It is found in the host cytoplasm. This is an uncharacterized protein from Escherichia phage Mu (Bacteriophage Mu).